We begin with the raw amino-acid sequence, 108 residues long: UPF0060 membrane protein Sca_1835 (108 aa).

Transmembrane regions (helical) follow at residues 5–25, 34–54, 60–80, and 84–104; these read ILIF…IWLW, FGLL…FQVF, VYAA…YVFD, and PDKY…IMLL.

It belongs to the UPF0060 family.

The protein resides in the cell membrane. The protein is UPF0060 membrane protein Sca_1835 of Staphylococcus carnosus (strain TM300).